The sequence spans 132 residues: Glycine cleavage system H protein (132 aa).

The 83-residue stretch at 24–106 (TVRVGLTDFA…YGAGWLLDVH (83 aa)) folds into the Lipoyl-binding domain. Position 65 is an N6-lipoyllysine (K65).

The protein belongs to the GcvH family. The glycine cleavage system is composed of four proteins: P, T, L and H. (R)-lipoate serves as cofactor.

In terms of biological role, the glycine cleavage system catalyzes the degradation of glycine. The H protein shuttles the methylamine group of glycine from the P protein to the T protein. This Mycobacterium leprae (strain Br4923) protein is Glycine cleavage system H protein.